A 335-amino-acid chain; its full sequence is GTPase Obg (335 aa).

One can recognise an Obg domain in the interval 1–159; the sequence is MQFIDRSEIE…RKLLLELKLL (159 aa). One can recognise an OBG-type G domain in the interval 160–328; the sequence is AEVGIIGLPN…LLARVWQVLE (169 aa). GTP contacts are provided by residues 166 to 173, 191 to 195, 213 to 216, 280 to 283, and 309 to 311; these read GLPNAGKS, FTTLV, DIPG, NKAD, and SAA. Mg(2+) is bound by residues S173 and T193.

The protein belongs to the TRAFAC class OBG-HflX-like GTPase superfamily. OBG GTPase family. As to quaternary structure, monomer. Mg(2+) is required as a cofactor.

Its subcellular location is the cytoplasm. Functionally, an essential GTPase which binds GTP, GDP and possibly (p)ppGpp with moderate affinity, with high nucleotide exchange rates and a fairly low GTP hydrolysis rate. Plays a role in control of the cell cycle, stress response, ribosome biogenesis and in those bacteria that undergo differentiation, in morphogenesis control. This Gloeobacter violaceus (strain ATCC 29082 / PCC 7421) protein is GTPase Obg.